The primary structure comprises 377 residues: Dehydrogenase/reductase SDR family member 13 (377 aa).

The signal sequence occupies residues 1-25; the sequence is MEALLLGAGLLLGAYVLVYYNLVKA. Ser-46 and Ile-48 together coordinate NAD(+). Residue Ser-170 participates in substrate binding. NAD(+)-binding residues include Tyr-197, Lys-201, and Ser-232. The active-site Proton acceptor is Tyr-197. Residues 309-377 form a disordered region; it reads RLAGLGPGED…AKVEPEIQLS (69 aa). Residues 317–331 are compositionally biased toward acidic residues; that stretch reads EDAEPDEDPQSEDSE. Residues 347–357 are compositionally biased toward low complexity; it reads SQPYPSPQSSP. Residues 368–377 show a composition bias toward basic and acidic residues; sequence AKVEPEIQLS.

Belongs to the short-chain dehydrogenases/reductases (SDR) family.

The protein resides in the secreted. Its function is as follows. Putative oxidoreductase. This Homo sapiens (Human) protein is Dehydrogenase/reductase SDR family member 13.